Reading from the N-terminus, the 124-residue chain is Acidic phospholipase A2 (124 aa).

7 disulfide bridges follow: Cys26-Cys117, Cys28-Cys44, Cys43-Cys97, Cys49-Cys124, Cys50-Cys90, Cys57-Cys83, and Cys77-Cys88. Positions 27, 29, and 31 each coordinate Ca(2+). The active site involves His47. Asp48 lines the Ca(2+) pocket. Glu89 is a catalytic residue.

This sequence belongs to the phospholipase A2 family. Group II subfamily. D49 sub-subfamily. The cofactor is Ca(2+). In terms of tissue distribution, expressed by the venom gland.

Its subcellular location is the secreted. The catalysed reaction is a 1,2-diacyl-sn-glycero-3-phosphocholine + H2O = a 1-acyl-sn-glycero-3-phosphocholine + a fatty acid + H(+). Snake venom phospholipase A2 (PLA2) that inhibits collagen- and ADP-induced platelet aggregation. PLA2 catalyzes the calcium-dependent hydrolysis of the 2-acyl groups in 3-sn-phosphoglycerides. The protein is Acidic phospholipase A2 of Bothrops jararaca (Jararaca).